A 313-amino-acid polypeptide reads, in one-letter code: Glutaminase (313 aa).

Substrate contacts are provided by Ser-64, Asn-116, Glu-163, Asn-170, Tyr-194, Tyr-246, and Val-264.

It belongs to the glutaminase family. In terms of assembly, homotetramer.

It catalyses the reaction L-glutamine + H2O = L-glutamate + NH4(+). The chain is Glutaminase from Exiguobacterium sp. (strain ATCC BAA-1283 / AT1b).